The primary structure comprises 88 residues: UPF0297 protein GK2555 (88 aa).

Belongs to the UPF0297 family.

In Geobacillus kaustophilus (strain HTA426), this protein is UPF0297 protein GK2555.